Here is a 485-residue protein sequence, read N- to C-terminus: Pelle-like serine/threonine-protein kinase pik-1 (485 aa).

Positions 115 to 132 (TSRVSKQMVQPPGSQSAS) are enriched in polar residues. Residues 115 to 155 (TSRVSKQMVQPPGSQSASRLKKTEIKESSPSPAAAAASQLS) form a disordered region. A compositionally biased stretch (low complexity) spans 142-152 (SSPSPAAAAAS). In terms of domain architecture, Protein kinase spans 185-485 (FAVSNVIGKG…LCKNSIPPVV (301 aa)). Residues 191 to 199 (IGKGGYGTV) and K214 contribute to the ATP site. D318 serves as the catalytic Proton acceptor.

Belongs to the protein kinase superfamily. TKL Ser/Thr protein kinase family. Pelle subfamily. As to quaternary structure, interacts with actl-1. Expressed in the nervous system.

The catalysed reaction is L-seryl-[protein] + ATP = O-phospho-L-seryl-[protein] + ADP + H(+). The enzyme catalyses L-threonyl-[protein] + ATP = O-phospho-L-threonyl-[protein] + ADP + H(+). In terms of biological role, through association with the adapter actl-1, may act downstream of the receptor complex composed of ilcr-1 and ilcr-2, which is a signaling complex that modulates neuronal activity and animal behavior in response to sensory neuron input. The protein is Pelle-like serine/threonine-protein kinase pik-1 of Caenorhabditis elegans.